A 257-amino-acid chain; its full sequence is MSTSQPGACPCQGAASRPAILYALLSSSLKAVPRPRSRCLCRQHRPVQLCAPHRTCREALDVLAKTVAFLRNLPSFWQLPPQDQRRLLQGCWGPLFLLGLAQDAVTFEVAEAPVPSILKKILLEEPSSSGGSGQLPDRPQPSLAAVQWLQCCLESFWSLELSPKEYACLKGTILFNPDVPGLQAASHIGHLQQEAHWVLCEVLEPWCPAAQGRLTRVLLTASTLKSIPTSLLGDLFFRPIIGDVDIAGLLGDMLLLR.

Residues 16–257 (SRPAILYALL…GLLGDMLLLR (242 aa)) enclose the NR LBD domain. Symmetric dimethylarginine; by PRMT5 is present on arginine 57.

Belongs to the nuclear hormone receptor family. NR0 subfamily. Interacts (via N-terminus) with NEUROD1 (via N-terminus and C-terminus). Interacts with ID2. Interacts with RORG, NFIL3, NR1D1 and BHLHE41. Heterodimer; efficient DNA binding requires dimerization with another bHLH protein. Interacts with RARA, RXRA, THRB, NR5A1, NR5A2, NR1I3, PPARA, PPARG and EID1. Interacts with HNF4A; the resulting heterodimer is transcriptionally inactive. Interacts with DDX3X; this interaction disrupts the interaction between HNF4 and NR0B2/SHP that forms inactive heterodimers and enhances the formation of active HNF4 homodimers. Arginine methylation by PRMT5 enhances repression activity of metabolic genes in liver in response to bile acid signaling, by increasing interaction with cofactors. Liver. Low levels of expression were detected in heart and pancreas.

The protein resides in the nucleus. The protein localises to the cytoplasm. Transcriptional regulator that acts as a negative regulator of receptor-dependent signaling pathways. Specifically inhibits transactivation of the nuclear receptor with which it interacts. Inhibits transcriptional activity of NEUROD1 on E-box-containing promoter by interfering with the coactivation function of the p300/CBP-mediated transcription complex for NEUROD1. Essential component of the liver circadian clock which via its interaction with NR1D1 and RORG regulates NPAS2-mediated hepatic lipid metabolism. Regulates the circadian expression of cytochrome P450 (CYP) enzymes. Represses: NR5A2 and HNF4A to down-regulate CYP2C38, NFLI3 to up-regulate CYP2A5, BHLHE41/HNF1A axis to up-regulate CYP1A2, CYP2E1 and CYP3A11, and NR1D1 to up-regulate CYP2B10, CYP4A10 and CYP4A14. The sequence is that of Nuclear receptor subfamily 0 group B member 2 (NR0B2) from Homo sapiens (Human).